An 880-amino-acid polypeptide reads, in one-letter code: Alanine--tRNA ligase (880 aa).

His-567, His-571, Cys-669, and His-673 together coordinate Zn(2+).

This sequence belongs to the class-II aminoacyl-tRNA synthetase family. The cofactor is Zn(2+).

It is found in the cytoplasm. It catalyses the reaction tRNA(Ala) + L-alanine + ATP = L-alanyl-tRNA(Ala) + AMP + diphosphate. Functionally, catalyzes the attachment of alanine to tRNA(Ala) in a two-step reaction: alanine is first activated by ATP to form Ala-AMP and then transferred to the acceptor end of tRNA(Ala). Also edits incorrectly charged Ser-tRNA(Ala) and Gly-tRNA(Ala) via its editing domain. This is Alanine--tRNA ligase from Bacillus cereus (strain ZK / E33L).